The following is a 66-amino-acid chain: Small ribosomal subunit protein bS21 (66 aa).

The interval 47–66 (KAQEAARRKRKFARKRMYED) is disordered. The span at 53–66 (RRKRKFARKRMYED) shows a compositional bias: basic residues.

The protein belongs to the bacterial ribosomal protein bS21 family.

In Rickettsia bellii (strain RML369-C), this protein is Small ribosomal subunit protein bS21.